The primary structure comprises 93 residues: YcgL domain-containing protein Spea_2443 (93 aa).

The YcgL domain maps to 1-85; the sequence is MICAVYKSLR…PVVNLLEQHK (85 aa).

This Shewanella pealeana (strain ATCC 700345 / ANG-SQ1) protein is YcgL domain-containing protein Spea_2443.